Reading from the N-terminus, the 100-residue chain is uncharacterized protein (100 aa).

The HTH arsR-type domain maps to 1–100 (MEPIEVFKAL…KLADFLKTEI (100 aa)). The H-T-H motif DNA-binding region spans 44-67 (VSQITDKLKMTQSTASQYLTILLR).

This is an uncharacterized protein from Bacillus subtilis (strain 168).